The sequence spans 468 residues: Tyrosine-protein phosphatase YopH (468 aa).

Residues 127-194 (ARGHVSSHSH…TVSPYGPEAR (68 aa)) form a disordered region. Residues 130–140 (HVSSHSHSVLH) are compositionally biased toward low complexity. The Tyrosine-protein phosphatase domain maps to 152–461 (SHLDPRTPPL…DVLIKLAEGQ (310 aa)). The active-site Phosphocysteine intermediate is the Cys-403.

This sequence belongs to the protein-tyrosine phosphatase family. Non-receptor class subfamily. As to quaternary structure, monomer.

The protein resides in the secreted. The catalysed reaction is O-phospho-L-tyrosyl-[protein] + H2O = L-tyrosyl-[protein] + phosphate. In terms of biological role, essential virulence determinant. This protein is a protein tyrosine phosphatase. The essential function of YopH in Yersinia pathogenesis is host-protein dephosphorylation. It contributes to the ability of the bacteria to resist phagocytosis by peritoneal macrophages. The chain is Tyrosine-protein phosphatase YopH (yopH) from Yersinia enterocolitica.